Here is a 484-residue protein sequence, read N- to C-terminus: Glutelin type-D 1 (484 aa).

The first 27 residues, 1–27, serve as a signal peptide directing secretion; sequence MATTTSLLSSCLCALLLAPLFSQGVDA. 2 cysteine pairs are disulfide-bonded: Cys-38–Cys-71 and Cys-114–Cys-292. Cupin type-1 domains follow at residues 43–238 and 298–447; these read LQAF…EASK and VNIE…DEAR.

It belongs to the 11S seed storage protein (globulins) family. Hexamer; each subunit is composed of an acidic and a basic chain derived from a single precursor and linked by a disulfide bond.

The protein localises to the protein storage vacuole. Seed storage protein. The chain is Glutelin type-D 1 from Oryza sativa subsp. japonica (Rice).